The sequence spans 194 residues: CD-NTase-associated protein 15 (194 aa).

The required for cell toxicity stretch occupies residues 1-73 (MRMWELLPSK…DYLKHKFCPD (73 aa)). 2 consecutive transmembrane segments (helical) span residues 15–35 (ISTIISIIVFLFFLEFLGQPV) and 43–63 (ITTITILAFIFGKYLWKYFYI).

The protein belongs to the CBASS Cap15 membrane effector family. The beta barrel domain oligomerizes; in the presence of cyclic nucleotides (probably 3',3'-cGAMP, but the cognate CD-NTase makes at least 4 other cyclic nucleotides) higher-level oligomers are detected.

Its subcellular location is the cell inner membrane. Functionally, effector protein of a CBASS antivirus system. CBASS (cyclic oligonucleotide-based antiphage signaling system) provides immunity against bacteriophages. The CD-NTase protein (CdnB) synthesizes cyclic nucleotides in response to infection; these serve as specific second messenger signals. The signals activate a diverse range of effectors, leading to bacterial cell death and thus abortive phage infection. Causes cell death in response to 3',3'-cGAMP upon coexpression in E.coli with V.cholerae DncV; inactivating DncV prevents cell death. Upon induction in E.coli with non-cognate DncV, the cell inner membrane shrinks and separates from the cell wall with a concomitant increase in the periplasm. Binds cyclic nucleotide second messenger 3',3'-cGAMP, probably oligomerizing, and induces cell membrane shrinkage and rupture, leading to cell death. A type I CBASS system. In terms of biological role, protects E.coli against phage infection. When the CBASS operon (cdnB-cap15) is introduced in E.coli MG1655 there is about 100-fold protection against phage T2 and about 10-fold protection against phage T5 and T6. The sequence is that of CD-NTase-associated protein 15 from Escherichia albertii.